The primary structure comprises 376 residues: Zinc finger CCCH domain-containing protein C337.12 (376 aa).

Residues 2–25 (NEQQLLENIASLAGAINQYKNEKE) are a coiled coil. The segment at 60-95 (SKSTAASPPYVIPSTSSNADDANKEPEKQSTSDYVS) is disordered. Basic and acidic residues predominate over residues 80-89 (DANKEPEKQS). The stretch at 105–140 (KKNILEHDLQARKANLESYRAKLEKEYKTLAENKIQ) forms a coiled coil. C3H1-type zinc fingers lie at residues 202–228 (SPSAVYCRYYNANGICGKGAACRFVHE), 229–256 (PTRKTICPKFLNGRCNKAEDCNLSHELD), 257–283 (PRRIPACRYFLLGKCNNPNCRYVHIHY), and 284–312 (SENAPICFEFAKYGFCELGTSCKNQHILQ). The tract at residues 347–376 (SKTAGSINPEDSGSEIGSNSLESNLDFISV) is disordered. Residues 349–369 (TAGSINPEDSGSEIGSNSLES) show a composition bias toward polar residues.

Its subcellular location is the nucleus. The sequence is that of Zinc finger CCCH domain-containing protein C337.12 from Schizosaccharomyces pombe (strain 972 / ATCC 24843) (Fission yeast).